The sequence spans 139 residues: DNA-directed RNA polymerase II subunit Rpb4 (139 aa).

This sequence belongs to the eukaryotic RPB4 RNA polymerase subunit family. RNA polymerase II consists of 12 different subunits.

The protein localises to the nucleus. It localises to the chromosome. Its function is as follows. DNA-dependent RNA polymerase catalyzes the transcription of DNA into RNA using the four ribonucleoside triphosphates as substrates. Associates with POLR2G. The protein is DNA-directed RNA polymerase II subunit Rpb4 of Drosophila melanogaster (Fruit fly).